A 355-amino-acid chain; its full sequence is Probable F-box protein At5g36000 (355 aa).

The segment covering 1 to 14 (MNTRSGDAEGDIRG) has biased composition (basic and acidic residues). The disordered stretch occupies residues 1–44 (MNTRSGDAEGDIRGKMIAPVRDGNGGQKRKLVQSNDIQRDEDGG). One can recognise an F-box; degenerate domain in the interval 78–124 (QSRFSWYEQDIWTYITRFLDGKSLVKLGATNKWFYKIAMEDTVWRFA).

This chain is Probable F-box protein At5g36000, found in Arabidopsis thaliana (Mouse-ear cress).